A 115-amino-acid polypeptide reads, in one-letter code: Class I hydrophobin C (115 aa).

An N-terminal signal peptide occupies residues 1–19; it reads MFSRVLVAALVALPVLVSA. 4 disulfides stabilise this stretch: cysteine 36–cysteine 93, cysteine 43–cysteine 87, cysteine 44–cysteine 74, and cysteine 94–cysteine 108.

Belongs to the fungal hydrophobin family. Self-assembles to form functional amyloid fibrils called rodlets. Self-assembly into fibrillar rodlets occurs spontaneously at hydrophobic:hydrophilic interfaces and the rodlets further associate laterally to form amphipathic monolayers.

The protein localises to the secreted. The protein resides in the cell wall. Functionally, aerial growth, conidiation, and dispersal of filamentous fungi in the environment rely upon a capability of their secreting small amphipathic proteins called hydrophobins (HPBs) with low sequence identity. Class I can self-assemble into an outermost layer of rodlet bundles on aerial cell surfaces, conferring cellular hydrophobicity that supports fungal growth, development and dispersal; whereas Class II form highly ordered films at water-air interfaces through intermolecular interactions but contribute nothing to the rodlet structure. This Agaricus bisporus (White button mushroom) protein is Class I hydrophobin C.